A 454-amino-acid polypeptide reads, in one-letter code: Allantoinase (454 aa).

Zn(2+) contacts are provided by histidine 59, histidine 61, lysine 150, histidine 190, histidine 246, and aspartate 319. At lysine 150 the chain carries N6-carboxylysine.

Belongs to the metallo-dependent hydrolases superfamily. Allantoinase family. In terms of assembly, homotetramer. Zn(2+) serves as cofactor. Carboxylation allows a single lysine to coordinate two zinc ions.

The enzyme catalyses (S)-allantoin + H2O = allantoate + H(+). The protein operates within nitrogen metabolism; (S)-allantoin degradation; allantoate from (S)-allantoin: step 1/1. In terms of biological role, catalyzes the conversion of allantoin (5-ureidohydantoin) to allantoic acid by hydrolytic cleavage of the five-member hydantoin ring. In Bacillus licheniformis (strain ATCC 14580 / DSM 13 / JCM 2505 / CCUG 7422 / NBRC 12200 / NCIMB 9375 / NCTC 10341 / NRRL NRS-1264 / Gibson 46), this protein is Allantoinase.